The sequence spans 1632 residues: Guanine exchange factor for Rac 30 (1632 aa).

One can recognise a Calponin-homology (CH) domain in the interval 16 to 122 (NIQIDSFTSW…VIFLLIQKIK (107 aa)). Disordered regions lie at residues 134–155 (QGET…TPTK) and 171–285 (FSHI…PTTG). Composition is skewed to low complexity over residues 137-154 (TTGT…TTPT) and 180-284 (QSSS…SPTT). 2 IQ domains span residues 388–417 (DLKK…KYKQ) and 432–461 (AYRG…LYRR). The DH domain occupies 460–638 (RRNEIVKEIL…KDVAEYVNEK (179 aa)). A compositionally biased stretch (low complexity) spans 775 to 795 (QINNQNNNQNNNQNNNLNNNN). The segment at 775–798 (QINNQNNNQNNNQNNNLNNNNDDS) is disordered. Positions 940-1038 (DSEFSNVLEK…WISLIRLSIK (99 aa)) constitute a PH 1 domain. Over residues 1138–1156 (STSASQSQSQSPSPSPSHS) the composition is skewed to low complexity. The interval 1138–1161 (STSASQSQSQSPSPSPSHSINQKQ) is disordered. One can recognise an Arf-GAP domain in the interval 1271 to 1389 (NSCGDNINND…NNNNNNSQNG (119 aa)). The C4-type zinc-finger motif lies at 1286 to 1309 (CAECGASDPSWVSINYGVVVCLDC). Low complexity-rich tracts occupy residues 1380-1402 (NNNN…TSTT), 1409-1431 (STPT…TTQT), and 1441-1481 (SSPT…TTPT). The tract at residues 1380–1521 (NNNNNNSQNG…SSHAITERKT (142 aa)) is disordered. Over residues 1500-1515 (DTSNGKGTWSRGSSHA) the composition is skewed to polar residues. One can recognise a PH 2 domain in the interval 1532–1631 (KKEHQGYLFK…WLDVLSSHTT (100 aa)).

The protein resides in the membrane. The protein localises to the cytoplasmic vesicle. It localises to the phagosome membrane. Functionally, GTPase-activating protein for Rac involved in streaming and development. The sequence is that of Guanine exchange factor for Rac 30 (gxcDD) from Dictyostelium discoideum (Social amoeba).